Here is a 1483-residue protein sequence, read N- to C-terminus: MSNTPYNSSVPSIASMTQSSVSRSPNMHTATTPGANTSSNSPPLHMSSDSSKIKRKRNRIPLSCTICRKRKVKCDKLRPHCQQCTKTGVAHLCHYMEQTWAEEAEKELLKDNELKKLRERVKSLEKTLSKVHSSPSSNSLKSYNIPESSNLFMGSDEHTTLVNANTGSASSASHMHQQQQQQQQQEQQQDFSRSANANANSSSLSISNKYDNDELDLTKDFDLLHIKSNGTIHLGATHWLSIMKGDPYLKLLWGHIFAMREKLNEWYYQKNSYSKLKSSKCPINHAQAPPSAAAAATRKCPVDHSAFSSGMVAPKEETPLPRKCPVDHTMFSSGMIPPREDTSSQKRCPVDHTMYSAGMMPPKDETPSPFSTKAMIDHNKHTMNPPQSKCPVDHRNYMKDYPSDMANSSSNPASRCPIDHSSMKNTAALPASTHNTIPHHQPQSGSHARSHPAQNRKHDSYMTESEVLATLCEMLPPKRVIALFIEKFFKHLYPAIPILDEQNFKNHMNQMLSLSSMNPTVNNFGMSMPSSSTLENQPITQINLPKLSDSCNLGILIIILRLTWLSIPSNSCEVDLGEESGSFLVPNESSNMSASALTSMAKEESLLLKHETPVEALELCQKYLIKFDELSSISNNNVNLTTVQFAIFYNFYMKSASNDLTTLTNTNNTGMANPGHDSESHQILLSNITQMAFSCGLHRDPDNFPQLNATIPATSQDVSNNGSKKANPSTNPTLNNNMSAATTNSSSRSGSADSRSGSNPVNKKENQVSIERFKHTWRKIWYYIVSMDVNQSLSLGSPRLLRNLREFSDTKLPSASRIDYVRDIKELIIVKNFTLFFQIDLCIIAVLNHILNVSLARSVRKFELDSLINLLKNLTYGTENVNDVVSSLINKGLLPTSEGGSVDSNNDEIYGLPKLTDILNHGQHNQNLYADGRNTSSSDIDKKLDLPHESTTRALFFSKHMTIRMLLYLLNYILFTHYEPMGSEDPGTNILAKEYAQEALNFAMDGYRNCMIFFNNIRNTNSLFDYMNVILSYPCLDIGHRSLQFIVCLILRAKCGPLTGMRESSIITNGTSSGFNSSVEDEDVKVKQESSDELKKDDFMKDVNLDSGDSLAEILMSRMLLFQKLTKQLSKKYNYAIRMNKSTGFFVSLLNTPSKKPDSKSGGSSFMLGNWKHPKVSNMSGFLAGDKDQLQKCPVYQDALGFVSPTGANEGSAPMQGMSLQGSTARMGGTQLPPIRSYKPITYTSSNLRRMNETGEAEAKRRRFNDGYIDNNSNNDIPRGISPKPSNGLSSVQPLLSSFSMNQLYGGTIPTVPSLTNITSQMGALPSLDRITTNQINLPDPSRDEAFDNSIKQMTPMTSAFMNANTTIPSSTLNGNMNMNGAGTANTDTSANGSALSTLTSPQGSDLASNSATQYKPDLEDFLMQNSNFNGLMINPSSLVEVVGGYNDPNNLGRNDAVDFLPVDNVEIDGLVDFYRADFPIWE.

The segment covering methionine 1–serine 50 has biased composition (polar residues). Positions methionine 1–lysine 56 are disordered. Residues cysteine 64, cysteine 67, cysteine 74, cysteine 81, cysteine 84, and cysteine 93 each contribute to the Zn(2+) site. The zn(2)-C6 fungal-type DNA-binding region spans cysteine 64–cysteine 93. Residues glutamate 105–serine 134 are a coiled coil. The span at valine 162 to histidine 176 shows a compositional bias: polar residues. The tract at residues valine 162–asparagine 208 is disordered. Positions glutamine 177–asparagine 208 are enriched in low complexity. The tract at residues lysine 244 to serine 444 is heme-responsive; required for HMC formation. HRM repeat units lie at residues lysine 280–histidine 285, lysine 299–histidine 304, lysine 323–histidine 328, arginine 347–histidine 352, lysine 389–histidine 394, and arginine 415–histidine 420. Polar residues-rich tracts occupy residues serine 432 to histidine 447 and glutamine 706 to leucine 734. Disordered stretches follow at residues serine 432–histidine 458 and glutamine 706–glutamine 767. Positions asparagine 735–asparagine 759 are enriched in low complexity. The HRM 7 repeat unit spans residues lysine 1192–glutamine 1197. Disordered stretches follow at residues aspartate 1266 to leucine 1289 and asparagine 1386 to serine 1411. Residues aspartate 1388–serine 1411 show a composition bias toward polar residues.

In terms of assembly, binds DNA as a homodimer. Interacts with SRO9 and YDJ1. In the absence of heme, binds to at least four cellular proteins, including YDJ1 and SRO9, forming a high-molecular-weight complex (HMC) which results in repression of its activity and dictates its DNA-binding specificity.

The protein localises to the nucleus. Regulation of oxygen dependent gene expression. It modulates the expression of Iso-1 (CYP1) and Iso-2 (CYP3) cytochrome c. In response to heme, promotes transcription of genes encoding functions required for respiration, controlling oxidative damage and repression of anaerobic genes. Binds to the sequence 5'-CGGNNNTNNCGG-3'. This is Heme-responsive zinc finger transcription factor HAP1 (HAP1) from Saccharomyces cerevisiae (strain JAY291) (Baker's yeast).